The sequence spans 636 residues: Multicopper oxidase CTB12 (636 aa).

The first 23 residues, 1–23 (MWSVRLYPLALTLLFQCVSPAAA), serve as a signal peptide directing secretion. Residues 62–168 (AGIGFREAIF…LYGAVVIAPD (107 aa)) form the Plastocyanin-like 1 domain. Residues H104 and H106 each contribute to the Cu cation site. The N-linked (GlcNAc...) asparagine glycan is linked to N136. Residues H148 and H150 each coordinate Cu cation. The N-linked (GlcNAc...) asparagine glycan is linked to N304. Residues 318-381 (LTFVNPGGLY…QEKARHVVRV (64 aa)) form the Plastocyanin-like 2 domain. N-linked (GlcNAc...) asparagine glycosylation occurs at N472. The 128-residue stretch at 486–613 (NVEDVPATEL…GGMGMVVLDG (128 aa)) folds into the Plastocyanin-like 3 domain. Cu cation-binding residues include H519, H522, and H524. N576 is a glycosylation site (N-linked (GlcNAc...) asparagine). Cu cation is bound by residues H595, C596, H597, and H601.

Belongs to the multicopper oxidase family.

It functions in the pathway mycotoxin biosynthesis. Its function is as follows. Multicopper oxidase; part of the gene cluster that mediates the biosynthesis of cercosporin, a light-activated, non-host-selective toxin. The perylenequinone chromophore of cercosporin absorbs light energy to attain an electronically-activated triplet state and produces active oxygen species such as the hydroxyl radical, superoxide, hydrogen peroxide or singlet oxygen upon reaction with oxygen molecules. These reactive oxygen species cause damage to various cellular components including lipids, proteins and nucleic acids. The first step of cercosporin biosynthesis is performed by the polyketide synthase CTB1 which catalyzes the formation of nor-toralactone. The starter unit acyltransferase (SAT) domain of CTB1 initiates polyketide extension by the selective utilization of acetyl-CoA, which is elongated to the heptaketide in the beta-ketoacyl synthase (KS) domain by successive condensations with six malonyl units introduced by the malonyl acyltransferase (MAT) domain. The product template (PT) domain catalyzes C4-C9 and C2-C11 aldol cyclizations and dehydrations to a trihydroxynaphthalene, which is thought to be delivered to the thioesterase (TE) domain for product release. The bifunctional enzyme CTB3 then methylates nor-toralactone to toralactone before conducting an unusual oxidative aromatic ring opening. The O-methyltransferase CTB2 further methylates the nascent OH-6 of the CBT3 product, blocking further oxidation at this site before the reductase CTB6 reduces the 2-oxopropyl ketone at position C7, giving naphthalene. The FAD-dependent monooxygenase CTB5 in concert with the multicopper oxidase CTB12 are responsible for homodimerization of naphthalene with CTB7 installing the dioxepine moiety, finally producing cercosporin. The fasciclin domain-containing protein CTB11 might act with CTB5 and CTB12 whereas the roles of CTB9 and CTB10 have still to be elucidated. The protein is Multicopper oxidase CTB12 of Cercospora beticola (Sugarbeet leaf spot fungus).